The primary structure comprises 662 residues: Glutathione hydrolase 7 (662 aa).

The Cytoplasmic portion of the chain corresponds to 1 to 106; it reads MAAENEASQE…ASECSCRQDG (106 aa). Residues serine 17, serine 72, serine 79, and serine 83 each carry the phosphoserine modification. A disordered region spans residues 26-90; that stretch reads SFPRLPEDEP…DGSPLRETRK (65 aa). Over residues 72 to 83 the composition is skewed to low complexity; sequence SSSSEMGSQDGS. A helical; Signal-anchor for type II membrane protein transmembrane segment spans residues 107 to 127; sequence LTVIVTACLTFATGVTVALIM. The Extracellular segment spans residues 128-662; the sequence is QIYFGDPQIF…SPDAAGATIL (535 aa). Residues asparagine 198, asparagine 267, asparagine 283, asparagine 330, asparagine 353, asparagine 394, asparagine 452, asparagine 519, and asparagine 586 are each glycosylated (N-linked (GlcNAc...) asparagine).

The protein belongs to the gamma-glutamyltransferase family. In terms of assembly, heterodimer composed of the light and heavy chains. The active site is located in the light chain. In terms of processing, cleaved by autocatalysis into a large and a small subunit and the autocatalytic cleavage is essential to the functional activation of the enzyme.

It localises to the membrane. It carries out the reaction an N-terminal (5-L-glutamyl)-[peptide] + an alpha-amino acid = 5-L-glutamyl amino acid + an N-terminal L-alpha-aminoacyl-[peptide]. The enzyme catalyses glutathione + H2O = L-cysteinylglycine + L-glutamate. The catalysed reaction is an S-substituted glutathione + H2O = an S-substituted L-cysteinylglycine + L-glutamate. It participates in sulfur metabolism; glutathione metabolism. In terms of biological role, hydrolyzes and transfers gamma-glutamyl moieties from glutathione and other gamma-glutamyl compounds to acceptors. In Bos taurus (Bovine), this protein is Glutathione hydrolase 7.